The primary structure comprises 476 residues: Retinoic acid receptor gamma (476 aa).

A modulating region spans residues 1–109 (MANSSKERLC…PPPPPRVYKP (109 aa)). Low complexity predominate over residues 81-96 (STVETQSTSSEEMVPS). Residues 81–102 (STVETQSTSSEEMVPSSPSPPP) form a disordered region. 2 NR C4-type zinc fingers span residues 110–130 (CFVCNDKSSGYHYGVSSCEGC) and 146–170 (CHRDKNCQINKVTRNRCQFCRLQKC). Residues 110 to 175 (CFVCNDKSSG…RLQKCFQVGM (66 aa)) constitute a DNA-binding region (nuclear receptor). The interval 176 to 205 (SKEAVRNDRNKKKKEIKEEVVLPDSYEMPP) is hinge. Positions 184 to 189 (RNKKKK) match the Nuclear localization signal motif. The region spanning 206-440 (EMEELIQKVS…PLIREMLENP (235 aa)) is the NR LBD domain. Positions 435-476 (EMLENPEAFEDGAATPKPSERSSSESSNGSPTGEDSSGSKTP) are disordered. A compositionally biased stretch (polar residues) spans 462 to 476 (NGSPTGEDSSGSKTP).

Belongs to the nuclear hormone receptor family. NR1 subfamily. In terms of assembly, heterodimer; with a rxr molecule. Binds DNA preferentially as a rar/rxr heterodimer. Expressed in embryos, tadpoles and various adult tissue such as kidney, testis, brain, liver, skeletal muscle and spleen.

Its subcellular location is the nucleus. Functionally, receptor for retinoic acid. Retinoic acid receptors bind as heterodimers to their target response elements in response to their ligands, all-trans or 9-cis retinoic acid, and regulate gene expression in various biological processes. The rar/rxr heterodimers bind to the retinoic acid response elements (RARE) composed of tandem 5'-AGGTCA-3' sites known as DR1-DR5. The chain is Retinoic acid receptor gamma (rarg) from Xenopus laevis (African clawed frog).